The chain runs to 218 residues: Peptide methionine sulfoxide reductase MsrA (218 aa).

The tract at residues 1–28 (MSFLDSYRKKTQMPSTDEALPGRAQPIP) is disordered. Cys-57 is an active-site residue.

The protein belongs to the MsrA Met sulfoxide reductase family.

It catalyses the reaction L-methionyl-[protein] + [thioredoxin]-disulfide + H2O = L-methionyl-(S)-S-oxide-[protein] + [thioredoxin]-dithiol. The catalysed reaction is [thioredoxin]-disulfide + L-methionine + H2O = L-methionine (S)-S-oxide + [thioredoxin]-dithiol. Functionally, has an important function as a repair enzyme for proteins that have been inactivated by oxidation. Catalyzes the reversible oxidation-reduction of methionine sulfoxide in proteins to methionine. This Brucella anthropi (strain ATCC 49188 / DSM 6882 / CCUG 24695 / JCM 21032 / LMG 3331 / NBRC 15819 / NCTC 12168 / Alc 37) (Ochrobactrum anthropi) protein is Peptide methionine sulfoxide reductase MsrA.